A 710-amino-acid polypeptide reads, in one-letter code: Assimilatory nitrate reductase catalytic subunit (710 aa).

One can recognise a 4Fe-4S Mo/W bis-MGD-type domain in the interval 19–77 (EKTYDTQCPFCSMQCKMQLVEQTIVTRKKYTAIGIDNPTTQGRLCIKGMNAHQHALNSS). [4Fe-4S] cluster contacts are provided by Cys26, Cys29, Cys33, and Cys63.

The protein belongs to the prokaryotic molybdopterin-containing oxidoreductase family. [4Fe-4S] cluster is required as a cofactor. It depends on Mo-bis(molybdopterin guanine dinucleotide) as a cofactor.

It participates in nitrogen metabolism; nitrate reduction (denitrification); dinitrogen from nitrate: step 1/4. Functionally, nitrate reductase is a key enzyme involved in the first step of nitrate assimilation in plants, fungi and bacteria. In Bacillus subtilis (strain 168), this protein is Assimilatory nitrate reductase catalytic subunit (nasC).